Here is a 375-residue protein sequence, read N- to C-terminus: MTLQHTPLNAIHRSLGARMVDFGGWDMPVNYGSQIEEHHAVRQDAGVFDVSHMCVVDLTGARVRDFLRGLLANNVDKLQTPGKALYSCMLNPKGGVIDDLIVYFFREDWFRLVVNAGTAPTDLEWIVAQNAAAGTDVTITPRRSDNNAGAEPLGILAVQGPNARAKTYAALPGSQAVGDALKPFNAGFVTVENVGEIMVARTGYTGEDGFELVVPAAQIAGVWERLLQAGVRPAGLGARDTLRLEAGMNLYGQDMDEHVSPLDAGLAWTVDLQSERDFTGKAALQAGGQREQFVGLILRDKGGVLRAHQKVITAAGDGEITSGTFSPSLSLSIALARLPKEVPVGTDVQVEIRDRKLTATVVKLPFVRNGKALVS.

Belongs to the GcvT family. The glycine cleavage system is composed of four proteins: P, T, L and H.

It carries out the reaction N(6)-[(R)-S(8)-aminomethyldihydrolipoyl]-L-lysyl-[protein] + (6S)-5,6,7,8-tetrahydrofolate = N(6)-[(R)-dihydrolipoyl]-L-lysyl-[protein] + (6R)-5,10-methylene-5,6,7,8-tetrahydrofolate + NH4(+). Functionally, the glycine cleavage system catalyzes the degradation of glycine. The protein is Aminomethyltransferase of Ralstonia pickettii (strain 12J).